Reading from the N-terminus, the 663-residue chain is Transforming growth factor beta activator LRRC32 (663 aa).

An N-terminal signal peptide occupies residues 1–17 (MSHQILLLLAMLTLGLA). Over 18–628 (ISQRREQVPC…CEKGGLKNVN (611 aa)) the chain is Extracellular. The LRRNT domain occupies 22 to 49 (REQVPCRTVNKEALCHGLGLLQVPSVLS). 10 LRR repeats span residues 49-72 (SLDI…PLGF), 73-96 (YTAL…VFQA), 98-123 (PYLE…GLGR), 125-148 (PLLV…LLGE), 149-172 (TPRL…TFWG), 174-196 (PAVE…AFEA), 197-220 (LPHL…SLQQ), 222-241 (QVLD…PEPQ), 243-267 (QFQL…VFPR), and 269-287 (IYLN…LPRG). Asparagine 204 is a glycosylation site (N-linked (GlcNAc...) asparagine). Residues asparagine 272, asparagine 305, and asparagine 309 are each glycosylated (N-linked (GlcNAc...) asparagine). The disordered stretch occupies residues 291-311 (LHAPSEGWSASPLSNPSRNAS). Over residues 301-311 (SPLSNPSRNAS) the composition is skewed to polar residues. LRR repeat units follow at residues 315-338 (LSQL…FLEH), 340-362 (TSLR…QVDS), 363-386 (LPCL…TKVL), 387-409 (GSLQ…TFAS), 411-433 (ASLQ…AEPG), 443-466 (IPTL…SFLH), 468-489 (PLTE…ALVG), 491-514 (EASL…LPCF), 515-539 (LRLK…AVSL), 541-559 (VLDL…AMGG), and 561-584 (ETSL…WLAA). Asparagine 346 carries an N-linked (GlcNAc...) asparagine glycan. N-linked (GlcNAc...) asparagine glycosylation is present at asparagine 546. The LRRCT domain occupies 572–621 (NPLSCCGNGWLAAQLHQGRVDVDATQDLICRFGSQEELSLSLVRPEDCEK). The chain crosses the membrane as a helical span at residues 629–649 (LILLLSFTLVSAIVLTTLATI). Topologically, residues 650-663 (CFLRRQKLSQQYKA) are cytoplasmic.

This sequence belongs to the LRRC32/LRRC33 family. In terms of assembly, interacts with TGFB1; associates via disulfide bonds with the Latency-associated peptide chain (LAP) regulatory chain of TGFB1, leading to regulate activation of TGF-beta-1. Interacts with TGFB2. Interacts with TGFB3; associates via disulfide bonds with the Latency-associated peptide chain (LAP) regulatory chain of TGFB3, leading to regulate activation of TGF-beta-3. Interacts with LAPTM4B; decreases TGFB1 production in regulatory T-cells. Present in medial edge epithelial cells at 14.5 dpc (at protein level).

It localises to the cell membrane. The protein resides in the cell surface. Key regulator of transforming growth factor beta (TGFB1, TGFB2 and TGFB3) that controls TGF-beta activation by maintaining it in a latent state during storage in extracellular space. Associates specifically via disulfide bonds with the Latency-associated peptide (LAP), which is the regulatory chain of TGF-beta, and regulates integrin-dependent activation of TGF-beta. Able to outcompete LTBP1 for binding to LAP regulatory chain of TGF-beta. Controls activation of TGF-beta-1 (TGFB1) on the surface of activated regulatory T-cells (Tregs). Required for epithelial fusion during palate development by regulating activation of TGF-beta-3 (TGFB3). The protein is Transforming growth factor beta activator LRRC32 of Mus musculus (Mouse).